The sequence spans 37 residues: Large ribosomal subunit protein bL36 (37 aa).

It belongs to the bacterial ribosomal protein bL36 family.

This is Large ribosomal subunit protein bL36 from Photobacterium profundum (strain SS9).